The chain runs to 825 residues: MVSSSNLGFPRMGENRELKKLVENYWQGKVEETQFQKELKEIRINHWKLQKEAGIEIIPSNDFSLYDQVLDHIHLFGAIPKRYTPVVESEIEDGSNGLRTYFAMGRGYQTSKAATQVSETNTQGAFASKVEKSIDVGSMEMKKWFDTNYHYIVPEFEDSQQFKLTNYGGYSEPKPIHEFLEAKSIDIETRPVVLGPISFLLLGKSSDSSKPYSSKFDSLVHLNALLGVYEELFKQFEKIGVKSVQIDEPVLCFDLFETELIKNAYTTAFNVIHKAAPNINILIATYFGEIRENIDLITSLPVNGIHIDTIRSSSSEVESVLTKIPTSWTISIGIIDGRNVWKNDLTKSLVTLKNIIAKTGSDRILLAPSCSLLHCPHSLTREIGRVESQVLDWLAFSLEKLKEISFLTYALNKCTFTTENTITFPEDTCSKIKEYYQLNKESNQKRRESKLIHNDIVKKRVTEITPSMLKRENPFPVRREAQRKRLTTLPALFPTTTIGSFPQTKEVRLARSNFKSKKITPEAYDQFIRDEIRKCIKVQEECELDVLVHGEFERTDMVEYFGEYLAGFVFTQNGWVQSYGSRCVKPPIIYGDVNRPVPMTLEYTTFAQTLTTKPMKGMLTGPVTILQWSFVRDDQPRSETCFQIGLAIRDEVTDLENKGIACIQIDEPAIREGLPLRLSDWNQYLKWAIDSFLLSSTGVKDSTQIHSHMCYSDFNDIFESIQRMDTDVLTIENSKSDLKLLKAFEKYGYTNEIGPGLYDIHSPRIPSVEDMKDRVEQMLKYLSTNLLWINPDCGLKTREPETTRLALINMVKVAKQFREIYANKE.

Positions 19 and 148 each coordinate 5-methyltetrahydropteroyltri-L-glutamate. Residues 498 to 500 (IGS) and Glu-551 contribute to the L-homocysteine site. Residues 498 to 500 (IGS) and Glu-551 each bind L-methionine. Residues Asp-556, Tyr-579, 582 to 583 (RC), and Trp-628 each bind 5-methyltetrahydropteroyltri-L-glutamate. L-homocysteine is bound at residue Asp-666. Asp-666 contacts L-methionine. His-708, Cys-710, and Glu-732 together coordinate Zn(2+). The Proton donor role is filled by His-761. Cys-793 is a Zn(2+) binding site.

It belongs to the vitamin-B12 independent methionine synthase family. The cofactor is Zn(2+).

The catalysed reaction is 5-methyltetrahydropteroyltri-L-glutamate + L-homocysteine = tetrahydropteroyltri-L-glutamate + L-methionine. Its pathway is amino-acid biosynthesis; L-methionine biosynthesis via de novo pathway; L-methionine from L-homocysteine (MetE route): step 1/1. In terms of biological role, catalyzes the transfer of a methyl group from 5-methyltetrahydrofolate to homocysteine resulting in methionine formation. The protein is 5-methyltetrahydropteroyltriglutamate--homocysteine methyltransferase (metE) of Dictyostelium discoideum (Social amoeba).